The following is a 400-amino-acid chain: Phosphoglycerate kinase (400 aa).

Substrate is bound by residues 22 to 24 (DFN), arginine 38, 61 to 64 (HLGR), arginine 119, and arginine 152. Residues lysine 205, glycine 296, glutamate 327, and 353–356 (GGDT) contribute to the ATP site.

Belongs to the phosphoglycerate kinase family. Monomer.

The protein localises to the cytoplasm. The catalysed reaction is (2R)-3-phosphoglycerate + ATP = (2R)-3-phospho-glyceroyl phosphate + ADP. It functions in the pathway carbohydrate degradation; glycolysis; pyruvate from D-glyceraldehyde 3-phosphate: step 2/5. The chain is Phosphoglycerate kinase from Campylobacter jejuni subsp. jejuni serotype O:2 (strain ATCC 700819 / NCTC 11168).